A 132-amino-acid chain; its full sequence is Ribosome-binding factor A (132 aa).

The interval 113-132 (EANSTRAKDDDEADAPAKDD) is disordered.

This sequence belongs to the RbfA family. As to quaternary structure, monomer. Binds 30S ribosomal subunits, but not 50S ribosomal subunits or 70S ribosomes.

The protein resides in the cytoplasm. In terms of biological role, one of several proteins that assist in the late maturation steps of the functional core of the 30S ribosomal subunit. Associates with free 30S ribosomal subunits (but not with 30S subunits that are part of 70S ribosomes or polysomes). Required for efficient processing of 16S rRNA. May interact with the 5'-terminal helix region of 16S rRNA. In Burkholderia ambifaria (strain MC40-6), this protein is Ribosome-binding factor A.